The sequence spans 525 residues: Cytochrome P450 703A2 (525 aa).

Residues Pro-3–Leu-23 form a helical membrane-spanning segment. Cys-455 lines the heme pocket.

It belongs to the cytochrome P450 family. Heme serves as cofactor.

Its subcellular location is the membrane. The catalysed reaction is dodecanoate + reduced [NADPH--hemoprotein reductase] + O2 = 7-hydroxydodecanoate + oxidized [NADPH--hemoprotein reductase] + H2O + H(+). Functionally, involved in pollen exine and anther epicuticular layer development. Catalyzes the in-chain hydroxylation of lauric acid (C12:0) preferentially on position 7, generating 7-hydroxylated lauric acid. Does not possess activity with other fatty acids (C14:0, C16:0, C16:1, and C18:0). Participates in a conserved pathway of in-chain hydroxylation of lauric acid required for anther cuticle and pollen exine formation. Directly regulated by TDR, a known regulator of tapetum programmed cell death (PCD) and pollen exine formation. This chain is Cytochrome P450 703A2, found in Oryza sativa subsp. japonica (Rice).